Here is a 175-residue protein sequence, read N- to C-terminus: NADH-ubiquinone oxidoreductase chain 6 (175 aa).

The next 6 helical transmembrane spans lie at 1-21 (MMYI…GFSS), 24-44 (SPVY…GIIM), 51-71 (LGLV…GYTI), 87-107 (VVLS…VWLF), 113-133 (LVGF…GSFG), and 148-168 (YGFW…FIAI).

This sequence belongs to the complex I subunit 6 family. Core subunit of respiratory chain NADH dehydrogenase (Complex I) which is composed of 45 different subunits.

Its subcellular location is the mitochondrion inner membrane. It carries out the reaction a ubiquinone + NADH + 5 H(+)(in) = a ubiquinol + NAD(+) + 4 H(+)(out). Its function is as follows. Core subunit of the mitochondrial membrane respiratory chain NADH dehydrogenase (Complex I) which catalyzes electron transfer from NADH through the respiratory chain, using ubiquinone as an electron acceptor. Essential for the catalytic activity and assembly of complex I. This is NADH-ubiquinone oxidoreductase chain 6 (MT-ND6) from Mammuthus primigenius (Siberian woolly mammoth).